Reading from the N-terminus, the 336-residue chain is Ketoreductase adrE (336 aa).

Tyr171 contacts NADP(+).

This sequence belongs to the NAD(P)-dependent epimerase/dehydratase family. Dihydroflavonol-4-reductase subfamily.

It functions in the pathway secondary metabolite biosynthesis; terpenoid biosynthesis. Ketoreductase; part of the gene cluster that mediates the biosynthesis of andrastins, meroterpenoid compounds that exhibit inhibitory activity against ras farnesyltransferase, suggesting that they could be promising leads for antitumor agents. The first step of the pathway is the synthesis of 3,5-dimethylorsellinic acid (DMOA) by the polyketide synthase adrD via condensation of one acetyl-CoA starter unit with 3 malonyl-CoA units and 2 methylations. DMAO is then converted to farnesyl-DMAO by the prenyltransferase adrG. The methyltransferase adrK catalyzes the methylation of the carboxyl group of farnesyl-DMAO to farnesyl-DMAO methyl ester which is further converted to epoxyfarnesyl-DMAO methyl ester by the FAD-dependent monooxygenase adrH. The terpene cyclase adrI then catalyzes the carbon skeletal rearrangement to generate the andrastin E, the first compound in the pathway having the andrastin scaffold, with the tetracyclic ring system. The post-cyclization tailoring enzymes adrF, adrE, adrJ, and adrA, are involved in the conversion of andrastin E into andrastin A. The short chain dehydrogenase adrF is responsible for the oxidation of the C-3 a hydroxyl group of andrastin E to yield the corresponding ketone, andrastin D. The ketoreductase adrE stereoselectively reduces the carbonyl moiety to reverse the stereochemistry of the C-3 position to yield andrastin F. The acetyltransferase adrJ is the acetyltransferase that attaches the acetyl group to the C-3 hydroxyl group of andrastin F to yield andrastin C. Finally, the cytochrome P450 monooxygenase adrA catalyzes two sequential oxidation reactions of the C-23 methyl group, to generate the corresponding alcohol andrastin B, and aldehyde andrastin A. The sequence is that of Ketoreductase adrE from Penicillium roqueforti.